Consider the following 523-residue polypeptide: Transcription initiation factor TFIID subunit 4 (523 aa).

Disordered regions lie at residues 1 to 100 and 185 to 241; these read MSLP…AASD and ASVE…VQGG. A compositionally biased stretch (low complexity) spans 58-77; sequence QMQPPRQPIQQQMQHFQSPS. Residues 78-87 show a composition bias toward pro residues; that stretch reads PMAPQGPPGT. In terms of domain architecture, TAFH spans 101 to 199; the sequence is DKNVTKCVRF…VNPPPGYVFN (99 aa). The segment covering 204–213 has biased composition (pro residues); that stretch reads PGPPQPPPPQ. The segment covering 214-236 has biased composition (low complexity); that stretch reads QQSQQQPPLEMRQIPNPNQIPPQ. Residues 329–383 are histone-fold; that stretch reads LKPDEVLNRITKRMMSSCSVEEEALVAISDAVESHLRELITLMAGVAEHRVESLR. A necessary and sufficient for interaction with oma-1 region spans residues 333–382; sequence EVLNRITKRMMSSCSVEEEALVAISDAVESHLRELITLMAGVAEHRVESL. Positions 407 to 435 are disordered; the sequence is QEEELRESREKESLIRMSKNKNSGKETIE.

Belongs to the TAF4 family. In terms of assembly, component of the TFIID basal transcription factor complex, composed of TATA-box-binding protein tbp-1, and a number of TBP-associated factors (TAFs). Interacts (via histone-fold domain) with oma-1 (via histone-fold domain). May also interact with oma-2. Interacts (via histone-fold domain) with taf-12 (via the histone-fold domain).

It localises to the nucleus. It is found in the cytoplasm. Its function is as follows. The TFIID basal transcription factor complex plays a major role in the initiation of RNA polymerase II (Pol II)-dependent transcription. TFIID recognizes and binds promoters via its subunit tbp-1, a TATA-box-binding protein, and promotes assembly of the pre-initiation complex (PIC). The TFIID complex consists of tbp-1 and TBP-associated factors (TAFs), including taf-4. Essential for early embryonic development, probably acting via activating transcription initiation by RNA polymerase II, as part of the TFIID complex. In early embryos, but not oocytes, remains, presumably inactive, in the cytoplasm as a result of binding to oma-1. Upon degradation of oma-1, taf-4 is released and bound by taf-12, and the taf-4/12 heterodimer translocates to the nucleus and transcriptional repression is relieved. Involved in lifespan extension in a manner dependent upon mitochondrial function. Plays a role in modulating polyribosome formation. The chain is Transcription initiation factor TFIID subunit 4 from Caenorhabditis elegans.